The primary structure comprises 623 residues: Endoglucanase 7 (623 aa).

Over 1–79 the chain is Cytoplasmic; that stretch reads MHPGNVWGGS…LGCVSVSRTV (79 aa). The helical; Signal-anchor for type II membrane protein transmembrane segment at 80 to 100 threads the bilayer; that stretch reads FLWTVGSIAVLFLVVALPIII. Over 101 to 623 the chain is Extracellular; that stretch reads VKSLPRHKSA…TPPPPKAWKP (523 aa). N-linked (GlcNAc...) asparagine glycosylation is found at Asn-116, Asn-221, Asn-328, Asn-349, Asn-412, Asn-429, and Asn-464. Residue His-517 is part of the active site. Residue Asn-548 is glycosylated (N-linked (GlcNAc...) asparagine). Residue Asp-565 is part of the active site. An N-linked (GlcNAc...) asparagine glycan is attached at Asn-571. Residue Glu-574 is part of the active site.

This sequence belongs to the glycosyl hydrolase 9 (cellulase E) family. In terms of tissue distribution, expressed in basal region of leaf blade and proximal parts of leaf and floral organ.

It is found in the membrane. The catalysed reaction is Endohydrolysis of (1-&gt;4)-beta-D-glucosidic linkages in cellulose, lichenin and cereal beta-D-glucans.. This is Endoglucanase 7 (KOR2) from Arabidopsis thaliana (Mouse-ear cress).